We begin with the raw amino-acid sequence, 233 residues long: Phosphoribosylformylglycinamidine synthase subunit PurQ (233 aa).

One can recognise a Glutamine amidotransferase type-1 domain in the interval 3–233 (SAVLVFPGIN…GLVEHLKTAA (231 aa)). The active-site Nucleophile is Cys87. Residues His204 and Glu206 contribute to the active site.

Part of the FGAM synthase complex composed of 1 PurL, 1 PurQ and 2 PurS subunits.

Its subcellular location is the cytoplasm. The catalysed reaction is N(2)-formyl-N(1)-(5-phospho-beta-D-ribosyl)glycinamide + L-glutamine + ATP + H2O = 2-formamido-N(1)-(5-O-phospho-beta-D-ribosyl)acetamidine + L-glutamate + ADP + phosphate + H(+). It catalyses the reaction L-glutamine + H2O = L-glutamate + NH4(+). The protein operates within purine metabolism; IMP biosynthesis via de novo pathway; 5-amino-1-(5-phospho-D-ribosyl)imidazole from N(2)-formyl-N(1)-(5-phospho-D-ribosyl)glycinamide: step 1/2. Functionally, part of the phosphoribosylformylglycinamidine synthase complex involved in the purines biosynthetic pathway. Catalyzes the ATP-dependent conversion of formylglycinamide ribonucleotide (FGAR) and glutamine to yield formylglycinamidine ribonucleotide (FGAM) and glutamate. The FGAM synthase complex is composed of three subunits. PurQ produces an ammonia molecule by converting glutamine to glutamate. PurL transfers the ammonia molecule to FGAR to form FGAM in an ATP-dependent manner. PurS interacts with PurQ and PurL and is thought to assist in the transfer of the ammonia molecule from PurQ to PurL. This Rhodopseudomonas palustris (strain HaA2) protein is Phosphoribosylformylglycinamidine synthase subunit PurQ.